The sequence spans 396 residues: Subtilisin-like protease 5 (396 aa).

An N-terminal signal peptide occupies residues 1-20 (MTGFFTFLSFSLAALSVTNA). Residues 21–116 (AHILSVPKGA…VEPDAIISQH (96 aa)) constitute a propeptide that is removed on maturation. Positions 37–113 (YIVVMKDDTS…VAFVEPDAII (77 aa)) constitute an Inhibitor I9 domain. Asn-63 is a glycosylation site (N-linked (GlcNAc...) asparagine). The Peptidase S8 domain occupies 125 to 396 (PWGLSRLSNR…SRLLYNGSGR (272 aa)). Residues Asp-156 and His-187 each act as charge relay system in the active site. Asn-230 and Asn-248 each carry an N-linked (GlcNAc...) asparagine glycan. Ser-342 acts as the Charge relay system in catalysis. Over residues 376–389 (PTIRNPGPDTTSRL) the composition is skewed to polar residues. The tract at residues 376–396 (PTIRNPGPDTTSRLLYNGSGR) is disordered. Asn-392 is a glycosylation site (N-linked (GlcNAc...) asparagine).

It belongs to the peptidase S8 family.

It is found in the secreted. Secreted subtilisin-like serine protease with keratinolytic activity that contributes to pathogenicity. This chain is Subtilisin-like protease 5 (SUB5), found in Trichophyton tonsurans (Scalp ringworm fungus).